A 1454-amino-acid polypeptide reads, in one-letter code: ABC transporter G family member 39 (1454 aa).

The region spanning 175–448 (LGFFHLLPSK…FEYFGFQCPE (274 aa)) is the ABC transporter 1 domain. 208 to 215 (GPPSSGKT) is an ATP binding site. The region spanning 526 to 739 (ELFKACFDRE…GQTAIVMNEF (214 aa)) is the ABC transmembrane type-2 1 domain. The next 7 membrane-spanning stretches (helical) occupy residues 544–564 (FVYV…MTVY), 584–604 (MFFS…FTVM), 623–643 (FALP…GIWI), 663–683 (LLAY…LGAI), 689–709 (ISNS…GFII), 716–736 (PWMT…AIVM), and 775–795 (FWIC…FYIL). The span at 812-824 (EEGKDKQKGENRG) shows a compositional bias: basic and acidic residues. Positions 812–838 (EEGKDKQKGENRGTEGSVVELNSSSNK) are disordered. One can recognise an ABC transporter 2 domain in the interval 853–1106 (LAFNNVNYYV…LVEYFEAVEG (254 aa)). 898-905 (GVSGAGKT) is an ATP binding site. The region spanning 1178-1392 (TQTKACFWKQ…TLYGLITSQV (215 aa)) is the ABC transmembrane type-2 2 domain. 7 helical membrane-spanning segments follow: residues 1199 to 1219 (AIRF…FWQI), 1231 to 1251 (NFFG…AATV), 1285 to 1303 (IMYN…YSMI), 1312 to 1332 (FLWF…YGMM), 1342 to 1362 (IAGI…GFLI), 1367 to 1387 (IPIW…LYGL), and 1423 to 1443 (FLPV…FVFA).

This sequence belongs to the ABC transporter superfamily. ABCG family. PDR (TC 3.A.1.205) subfamily.

It localises to the membrane. In terms of biological role, may be a general defense protein. The chain is ABC transporter G family member 39 (ABCG39) from Arabidopsis thaliana (Mouse-ear cress).